We begin with the raw amino-acid sequence, 418 residues long: Nucleoside permease NupC (418 aa).

The next 9 membrane-spanning stretches (helical) occupy residues 2-22, 34-54, 93-113, 174-194, 198-218, 264-284, 292-314, 354-374, and 395-415; these read IFSSLFSVVGMAVLFLIAWVF, IVSAFVIQVALGALALYVPLG, IGGFVFAINVLAIIIFFASLI, IFAVMCVGMASVAGPVLAGYA, IPLPYLIAASFMSAPGGLLFA, LLAFVGMLALINGLLGVVGGF, LGLILGTLLKPLAFMLGIPWSQA, AIITFALCGFANLSSVAMLIG, and VLVGTLSNFMSATIAGLFIGL.

The protein belongs to the concentrative nucleoside transporter (CNT) (TC 2.A.41) family.

It is found in the cell inner membrane. Involved in purine nucleosides uptake. Could also be involved in uptake of nucleobases. This Helicobacter pylori (strain ATCC 700392 / 26695) (Campylobacter pylori) protein is Nucleoside permease NupC.